Reading from the N-terminus, the 714-residue chain is Pre-mRNA-splicing factor CLF1 (714 aa).

12 HAT repeats span residues 48–80 (SFQL…WEVK), 83–115 (HDFP…FELS), 117–149 (KNIT…TEET), 151–182 (KNYQ…YEKR), 184–215 (DEYD…FEMN), 265–305 (KEYE…FEKS), 315–347 (SIMI…ILQQ), 349–384 (DNNE…IWVK), 394–430 (GSIE…FEIR), 435–470 (NGLA…LEQK), 472–510 (GEWD…FEKN), and 555–586 (MRYA…FESS).

It belongs to the crooked-neck family. In terms of assembly, associated with the spliceosome.

The protein localises to the nucleus. Functionally, involved in pre-mRNA splicing and cell cycle progression. Required for the spliceosome assembly and initiation of the DNA replication. The polypeptide is Pre-mRNA-splicing factor CLF1 (CLF1) (Debaryomyces hansenii (strain ATCC 36239 / CBS 767 / BCRC 21394 / JCM 1990 / NBRC 0083 / IGC 2968) (Yeast)).